A 504-amino-acid polypeptide reads, in one-letter code: MTIYNINLGIGWASSGVEYAQAYRAQILRSLGMPAKFIFTNMFQSENLEHFTKNIGFEDNEIIWLYGYFTDVKISGTTYKKDDLEATFSQCPTKKEASSDRKLIRYYFENQELYINASLYGENQEYVQRVEYVVKGKLIRKDYYSYTKVFSEFYSPGENGVQLCNRSFYNEDGSIAYEEILSNEKSTFVFSNKICYGLEELLEFMLEDLSLTKSDLILLDRATGIGQVVFENIGAAKLAVVIHAEHFNEKNTDEHNILWNNYYEYQFTNADKVNAFITSTERQKILLEEQFTQYTSLHPKIVAIPVGSLDQLKFPEQSRKSFSMMTGSRLAIEKHIDWLIEGVALAQKRLPELTFDIYGEGGERRKLTELLTKLHAGEFIELKGHKQLDEIYQNYELYLTASTSEGFGLTLMEAVGSGLPIIGFDVPYGNQTFVCSGENGLLIERPKGDDRSRIVQAFADSIYEYFTKFKMADAQQYSYNIAENYKHEKLVERWKDFIEEMLND.

A UDP-binding site is contributed by 16 to 19; it reads GVEY. His-243 is an N-acetyl-D-glucosamine binding site. UDP is bound at residue 385-386; the sequence is HK. An N-acetyl-D-glucosamine-binding site is contributed by 405-408; that stretch reads EGFG.

Belongs to the glycosyltransferase group 1 family. Glycosyltransferase 4 subfamily. As to quaternary structure, interacts with stabilizing protein GtfB (Gtf1), probably via the N-terminus of this protein; probably forms a heterotetramer with 2 subunits each of GtfA and GtfB. Part of the accessory SecA2/SecY2 protein translocation apparatus.

It is found in the cytoplasm. Its subcellular location is the cell membrane. The catalysed reaction is L-seryl-[protein] + UDP-N-acetyl-alpha-D-glucosamine = 3-O-[N-acetyl-alpha-D-glucosaminyl]-L-seryl-[protein] + UDP + H(+). The protein operates within protein modification; protein glycosylation. Functionally, required for polymorphic O-glycosylation of serine-rich repeat protein Fap1. Catalyzes the first step in glycosylation by transferring N-acetylglucosamine from UDP-GlcNAc to serine residues in Fap1. Part of the accessory SecA2/SecY2 system specifically required to export Fap1, a serine-rich fimbrial adhesin encoded upstream in the same operon. The GtfA-GtfB (Gtf1-Gtf2 in this bacteria) complex adds GlcNAc from UDP-GlcNAc to Fap1, attaching the first sugar residue. Cannot use not UDP-Glc as substrate. This subunit has very low glycosyltransferase activity; the GtfB stabilizing protein enhances membrane association, protease resistance and glycosyltransferase activity. This chain is UDP-N-acetylglucosamine--peptide N-acetylglucosaminyltransferase GtfA subunit, found in Streptococcus parasanguinis.